Reading from the N-terminus, the 1284-residue chain is Kinesin-like protein KIN-4C (1284 aa).

Residues 12 to 364 (SVKVVVNIRP…LKYANRARNI (353 aa)) form the Kinesin motor domain. 91 to 98 (GQTGSGKT) contributes to the ATP binding site. 3 coiled-coil regions span residues 407-445 (SAAL…EQLA), 561-711 (RDHS…QFRS), and 911-950 (MCKE…NMLL). 2 disordered regions span residues 1040–1070 (RRQT…SQEK) and 1158–1284 (MSEK…NHLR). Positions 1043 to 1070 (TVSSHLNPNPGSGTTQKSAKSEMASQEK) are enriched in polar residues. 2 stretches are compositionally biased toward basic and acidic residues: residues 1158 to 1172 (MSEK…RKPL) and 1275 to 1284 (NANEKENHLR).

It belongs to the TRAFAC class myosin-kinesin ATPase superfamily. Kinesin family. KIN-4 subfamily. As to quaternary structure, homodimer.

In terms of biological role, microtubule-dependent motor protein involved in the control of the oriented deposition of cellulose microfibrils. This is Kinesin-like protein KIN-4C from Oryza sativa subsp. japonica (Rice).